The primary structure comprises 601 residues: Proteasome-associated ATPase (601 aa).

Over residues 1–15 (MSGPRSGSGSGGSTG) the composition is skewed to gly residues. Positions 1–31 (MSGPRSGSGSGGSTGRPGDAESRRSAYEKEA) are disordered. Residues 18–31 (GDAESRRSAYEKEA) are compositionally biased toward basic and acidic residues. The stretch at 18-106 (GDAESRRSAY…LKEEVDRLAQ (89 aa)) forms a coiled coil. An ATP-binding site is contributed by 289–294 (GCGKTL). Residues 600–601 (YL) are docks into pockets in the proteasome alpha-ring.

This sequence belongs to the AAA ATPase family. Homohexamer. Assembles into a hexameric ring structure that caps the 20S proteasome core. Strongly interacts with the prokaryotic ubiquitin-like protein Pup through a hydrophobic interface; the interacting region of ARC lies in its N-terminal coiled-coil domain. There is one Pup binding site per ARC hexamer ring. Upon ATP-binding, the C-terminus of ARC interacts with the alpha-rings of the proteasome core, possibly by binding to the intersubunit pockets.

It participates in protein degradation; proteasomal Pup-dependent pathway. Functionally, ATPase which is responsible for recognizing, binding, unfolding and translocation of pupylated proteins into the bacterial 20S proteasome core particle. May be essential for opening the gate of the 20S proteasome via an interaction with its C-terminus, thereby allowing substrate entry and access to the site of proteolysis. Thus, the C-termini of the proteasomal ATPase may function like a 'key in a lock' to induce gate opening and therefore regulate proteolysis. The polypeptide is Proteasome-associated ATPase (Frankia alni (strain DSM 45986 / CECT 9034 / ACN14a)).